Here is a 707-residue protein sequence, read N- to C-terminus: Serine/threonine protein kinase UL97 (707 aa).

Positions 1–14 are enriched in low complexity; sequence MSSALRSRARSASL. Disordered regions lie at residues 1-32, 113-147, 176-199, and 231-264; these read MSSA…PSRA, DGEK…DGYH, FTGG…PLRP, and ESQD…EADS. Residues 113 to 127 are compositionally biased toward basic and acidic residues; sequence DGEKEDAASDKENQR. The span at 178–188 shows a compositional bias: low complexity; sequence GGSDPSDSVSG. Catalysis depends on Asp-456, which acts as the Proton acceptor.

It belongs to the protein kinase superfamily. Tyr protein kinase family. HCMV ganciclovir subfamily. Interacts with UL83. Autophosphorylates on serine and threonine residues.

Its subcellular location is the virion. It carries out the reaction L-seryl-[protein] + ATP = O-phospho-L-seryl-[protein] + ADP + H(+). It catalyses the reaction L-threonyl-[protein] + ATP = O-phospho-L-threonyl-[protein] + ADP + H(+). Functionally, serine/threonine protein kinase that plays important roles in several processes including nuclear viral egress, viral replication or regulation of host cell cycle progression. Participates in the acquisition of tegument during virion morphogenesis in the nucleus. Redistributes the host nuclear lamina by phosphorylating cellular Lamins-A/C. Plays a role in viral DNA synthesis by phosphorylating the DNA polymerase processivity factor UL44. Stimulates host cell cycle to support viral DNA synthesis by phosphorylating host retinoblastoma/RB1 protein. Additional substrates have been identified including host EF1D or H2B. Also phosphorylates host SAMHD1 and thereby counteracts its antiviral effect by reducing its dNTP hydrolase activity. This is Serine/threonine protein kinase UL97 (UL97) from Homo sapiens (Human).